The primary structure comprises 365 residues: 2-aminoethylphosphonate--pyruvate transaminase (365 aa).

The residue at position 194 (K194) is an N6-(pyridoxal phosphate)lysine.

The protein belongs to the class-V pyridoxal-phosphate-dependent aminotransferase family. PhnW subfamily. In terms of assembly, homodimer. Pyridoxal 5'-phosphate is required as a cofactor.

The enzyme catalyses (2-aminoethyl)phosphonate + pyruvate = phosphonoacetaldehyde + L-alanine. In terms of biological role, involved in phosphonate degradation. The chain is 2-aminoethylphosphonate--pyruvate transaminase from Bacillus cereus (strain ZK / E33L).